A 146-amino-acid polypeptide reads, in one-letter code: Hemoglobin subunit beta (146 aa).

V1 bears the N-acetylvaline mark. In terms of domain architecture, Globin spans 2–146; the sequence is HLTPEEKNAV…VANALAHKYH (145 aa). T12 carries the post-translational modification Phosphothreonine. S44 carries the phosphoserine modification. K59 is modified (N6-acetyllysine). Residue H63 coordinates heme b. At K82 the chain carries N6-acetyllysine. H92 lines the heme b pocket. An S-nitrosocysteine modification is found at C93. K144 carries the post-translational modification N6-acetyllysine.

The protein belongs to the globin family. Heterotetramer of two alpha chains and two beta chains. As to expression, red blood cells.

Its function is as follows. Involved in oxygen transport from the lung to the various peripheral tissues. In Macaca mulatta (Rhesus macaque), this protein is Hemoglobin subunit beta (HBB).